Consider the following 122-residue polypeptide: Putative iron-sulfur cluster insertion protein ErpA (122 aa).

Residues Cys50, Cys114, and Cys116 each coordinate iron-sulfur cluster.

Belongs to the HesB/IscA family. In terms of assembly, homodimer. The cofactor is iron-sulfur cluster.

Functionally, required for insertion of 4Fe-4S clusters. This Cupriavidus necator (strain ATCC 17699 / DSM 428 / KCTC 22496 / NCIMB 10442 / H16 / Stanier 337) (Ralstonia eutropha) protein is Putative iron-sulfur cluster insertion protein ErpA.